Reading from the N-terminus, the 553-residue chain is Nucleoside-diphosphatase mig-23 (553 aa).

The Cytoplasmic portion of the chain corresponds to 1-8; that stretch reads MRVSRRFT. A helical transmembrane segment spans residues 9 to 29; it reads ILAITAMIFLSLIICIYAVAA. The Lumenal portion of the chain corresponds to 30 to 489; sequence HTTVNVILQK…IVKETHSASE (460 aa). Residue Glu-174 is the Proton acceptor of the active site. N-linked (GlcNAc...) asparagine glycosylation is found at Asn-190 and Asn-284. The helical transmembrane segment at 490-510 threads the bilayer; it reads SLWAPLFFLSAVFCLFVLVCA. Over 511–553 the chain is Cytoplasmic; the sequence is KEHSLLCFDDKRRASFGLTRRQYSYKMLKEDRTSSSAFLENFA.

Belongs to the GDA1/CD39 NTPase family.

Its subcellular location is the golgi apparatus membrane. It carries out the reaction a ribonucleoside 5'-diphosphate + H2O = a ribonucleoside 5'-phosphate + phosphate + H(+). Its function is as follows. Seems to be able to hydrolyze ADP, UDP and GDP. Supports mig-17 glycosylation and surface expression, which is required for proper migration of distal tip cells during gonad morphogenesis. The sequence is that of Nucleoside-diphosphatase mig-23 from Caenorhabditis briggsae.